The primary structure comprises 542 residues: CTP synthase (542 aa).

An amidoligase domain region spans residues 1–265 (MTKFVFVTGG…DEIVCHKLNL (265 aa)). S13 contacts CTP. UTP is bound at residue S13. ATP-binding positions include 14–19 (SLGKGI) and D71. Mg(2+)-binding residues include D71 and E139. CTP contacts are provided by residues 146 to 148 (DIE), 186 to 191 (KTKPTQ), and K222. UTP contacts are provided by residues 186–191 (KTKPTQ) and K222. One can recognise a Glutamine amidotransferase type-1 domain in the interval 290 to 542 (NVAFVGKYVD…IAAALANRKA (253 aa)). G351 contacts L-glutamine. Residue C378 is the Nucleophile; for glutamine hydrolysis of the active site. L-glutamine-binding positions include 379-382 (LGMQ), E402, and R468. Catalysis depends on residues H515 and E517.

Belongs to the CTP synthase family. Homotetramer.

It carries out the reaction UTP + L-glutamine + ATP + H2O = CTP + L-glutamate + ADP + phosphate + 2 H(+). The enzyme catalyses L-glutamine + H2O = L-glutamate + NH4(+). It catalyses the reaction UTP + NH4(+) + ATP = CTP + ADP + phosphate + 2 H(+). It participates in pyrimidine metabolism; CTP biosynthesis via de novo pathway; CTP from UDP: step 2/2. With respect to regulation, allosterically activated by GTP, when glutamine is the substrate; GTP has no effect on the reaction when ammonia is the substrate. The allosteric effector GTP functions by stabilizing the protein conformation that binds the tetrahedral intermediate(s) formed during glutamine hydrolysis. Inhibited by the product CTP, via allosteric rather than competitive inhibition. In terms of biological role, catalyzes the ATP-dependent amination of UTP to CTP with either L-glutamine or ammonia as the source of nitrogen. Regulates intracellular CTP levels through interactions with the four ribonucleotide triphosphates. The polypeptide is CTP synthase (Methylobacillus flagellatus (strain ATCC 51484 / DSM 6875 / VKM B-1610 / KT)).